A 66-amino-acid chain; its full sequence is MVSKFKILVPQPRSRFLLVRCPVCGNEQVIFSHATFPARCLVCGAQLVEPTGGKAKILGQVVRVLG.

The Zn(2+) site is built by Cys21, Cys24, Cys40, and Cys43. A C4-type zinc finger spans residues 21-43 (CPVCGNEQVIFSHATFPARCLVC).

The protein belongs to the eukaryotic ribosomal protein eS27 family. In terms of assembly, part of the 30S ribosomal subunit. Requires Zn(2+) as cofactor.

In Hyperthermus butylicus (strain DSM 5456 / JCM 9403 / PLM1-5), this protein is Small ribosomal subunit protein eS27.